We begin with the raw amino-acid sequence, 207 residues long: dTDP-4-dehydrorhamnose 3-epimerase (207 aa).

Substrate-binding positions include Arg23, Asp28, 47–49, and Arg59; that span reads QAN. His62 serves as the catalytic Proton acceptor. Lys72 and His119 together coordinate substrate. The active-site Proton donor is the Tyr132. Residues Glu143 and Arg167 each coordinate substrate.

Belongs to the dTDP-4-dehydrorhamnose 3,5-epimerase family.

Its pathway is antibiotic biosynthesis; novobiocin biosynthesis. Functionally, dTDP-6-deoxy-D-xylo-4-hexulose 3-epimerase that acts together with NovU to catalyze the formation of dTDP-4-keto-6-deoxy-5-C-methyl-L-lyxo-hexose from dTDP-4-keto-6-deoxy-D-glucose in the novobiocin biosynthesis pathway, an aminocoumarin family antibiotic that targets bacterial DNA gyrases. The protein is dTDP-4-dehydrorhamnose 3-epimerase of Streptomyces niveus (Streptomyces spheroides).